Reading from the N-terminus, the 120-residue chain is Probable non-functional immunoglobulin kappa variable 2D-24 (120 aa).

The signal sequence occupies residues 1 to 19 (MRLLAQLLGLLMLWVPGSS). The region spanning 20–120 (GDIVMTQTPL…YYCTQATQFP (101 aa)) is the Ig-like domain. The segment at 21–43 (DIVMTQTPLSSPVTLGQPASISF) is framework-1. The complementarity-determining-1 stretch occupies residues 44-59 (RSSQSLVHSDGNTYLS). The segment at 60–74 (WLQQRPGQPPRLLIY) is framework-2. Residues 75-81 (KVSNRFS) form a complementarity-determining-2 region. The interval 82–113 (GVPDRFSGSGAGTDFTLKISRVEAEDVGVYYC) is framework-3. The tract at residues 114–120 (TQATQFP) is complementarity-determining-3.

As to quaternary structure, most probably, the immunoglobulin is not assembled due to incorrect folding of light chain. Immunoglobulins are composed of two identical heavy chains and two identical light chains; disulfide-linked.

The protein resides in the secreted. The protein localises to the cell membrane. Probable non-functional open reading frame (ORF) of V region of the variable domain of immunoglobulin light chains. Non-functional ORF generally cannot participate in the synthesis of a productive immunoglobulin chain due to altered V-(D)-J or switch recombination and/or splicing site (at mRNA level) and/or conserved amino acid change (protein level). Immunoglobulins, also known as antibodies, are membrane-bound or secreted glycoproteins produced by B lymphocytes. In the recognition phase of humoral immunity, the membrane-bound immunoglobulins serve as receptors which, upon binding of a specific antigen, trigger the clonal expansion and differentiation of B lymphocytes into immunoglobulins-secreting plasma cells. Secreted immunoglobulins mediate the effector phase of humoral immunity, which results in the elimination of bound antigens. The antigen binding site is formed by the variable domain of one heavy chain, together with that of its associated light chain. Thus, each immunoglobulin has two antigen binding sites with remarkable affinity for a particular antigen. The variable domains are assembled by a process called V-(D)-J rearrangement and can then be subjected to somatic hypermutations which, after exposure to antigen and selection, allow affinity maturation for a particular antigen. The protein is Probable non-functional immunoglobulin kappa variable 2D-24 of Homo sapiens (Human).